The following is a 172-amino-acid chain: Translocon-associated protein subunit delta (172 aa).

The signal sequence occupies residues 1 to 23 (MAAMASFGALALLLLSGLSCCSE). The Lumenal portion of the chain corresponds to 24 to 143 (ACLEPQITPS…SVDHRGTWNG (120 aa)). A disulfide bridge links Cys25 with Cys56. Residue Lys72 forms a Glycyl lysine isopeptide (Lys-Gly) (interchain with G-Cter in ubiquitin) linkage. A helical transmembrane segment spans residues 144 to 164 (PWVSTEVLAAVIGIVIYYLAF). Residues 165 to 172 (SAKSHIQA) are Cytoplasmic-facing.

Belongs to the TRAP-delta family. In terms of assembly, heterotetramer of TRAP-alpha, TRAP-beta, TRAP-delta and TRAP-gamma.

It is found in the endoplasmic reticulum membrane. In terms of biological role, TRAP proteins are part of a complex whose function is to bind calcium to the ER membrane and thereby regulate the retention of ER resident proteins. In Mus musculus (Mouse), this protein is Translocon-associated protein subunit delta (Ssr4).